Reading from the N-terminus, the 86-residue chain is Cell division topological specificity factor (86 aa).

This sequence belongs to the MinE family.

In terms of biological role, prevents the cell division inhibition by proteins MinC and MinD at internal division sites while permitting inhibition at polar sites. This ensures cell division at the proper site by restricting the formation of a division septum at the midpoint of the long axis of the cell. The polypeptide is Cell division topological specificity factor (Shewanella halifaxensis (strain HAW-EB4)).